The chain runs to 326 residues: Adenosine receptor A1 (326 aa).

The Extracellular segment spans residues 1–10 (MPPYISAFQA). A helical transmembrane segment spans residues 11 to 33 (AYIGIEVLIALVSVPGNVLVIWA). Over 34–46 (VKVNQALRDATFC) the chain is Cytoplasmic. A helical membrane pass occupies residues 47–69 (FIVSLAVADVAVGALVIPLAILI). Over 70–80 (NIGPQTYFHTC) the chain is Extracellular. A disulfide bridge connects residues C80 and C169. A helical membrane pass occupies residues 81–102 (LMVACPVLILTQSSILALLAIA). Topologically, residues 103–123 (VDRYLRVKIPLRYKTVVTQRR) are cytoplasmic. A helical transmembrane segment spans residues 124 to 146 (AAVAIAGCWILSLVVGLTPMFGW). Topologically, residues 147-176 (NNLSEVEQAWIANGSVGEPVIKCEFEKVIS) are extracellular. 2 N-linked (GlcNAc...) asparagine glycosylation sites follow: N148 and N159. The helical transmembrane segment at 177–201 (MEYMVYFNFFVWVLPPLLLMVLIYL) threads the bilayer. Over 202-235 (EVFYLIRKQLNKKVSASSGDPQKYYGKELKIAKS) the chain is Cytoplasmic. The helical transmembrane segment at 236-259 (LALILFLFALSWLPLHILNCITLF) threads the bilayer. Residues 260-267 (CPTCQKPS) lie on the Extracellular side of the membrane. The helical transmembrane segment at 268–292 (ILIYIAIFLTHGNSAMNPIVYAFRI) threads the bilayer. The Cytoplasmic portion of the chain corresponds to 293-326 (HKFRVTFLKIWNDHFRCQPKPPIEEDIPEEKADD). C309 is lipidated: S-palmitoyl cysteine.

Belongs to the G-protein coupled receptor 1 family.

It is found in the cell membrane. Its function is as follows. Receptor for adenosine. The activity of this receptor is mediated by G proteins which inhibit adenylyl cyclase. The chain is Adenosine receptor A1 (Adora1) from Mus musculus (Mouse).